The sequence spans 87 residues: Exodeoxyribonuclease 7 small subunit (87 aa).

It belongs to the XseB family. Heterooligomer composed of large and small subunits.

The protein resides in the cytoplasm. It carries out the reaction Exonucleolytic cleavage in either 5'- to 3'- or 3'- to 5'-direction to yield nucleoside 5'-phosphates.. Functionally, bidirectionally degrades single-stranded DNA into large acid-insoluble oligonucleotides, which are then degraded further into small acid-soluble oligonucleotides. This is Exodeoxyribonuclease 7 small subunit from Pelotomaculum thermopropionicum (strain DSM 13744 / JCM 10971 / SI).